We begin with the raw amino-acid sequence, 397 residues long: Cytochrome b (397 aa).

The next 4 membrane-spanning stretches (helical) occupy residues 38–58 (FGSL…FLAM), 82–104 (WLLR…LHIF), 119–139 (VWCL…IGYV), and 185–205 (FFSL…LHLA). Heme b contacts are provided by histidine 88 and histidine 102. Heme b is bound by residues histidine 189 and histidine 203. Histidine 208 serves as a coordination point for a ubiquinone. 4 consecutive transmembrane segments (helical) span residues 231-251 (FYVK…IWIF), 295-315 (AGGV…PFFK), 327-347 (IYQG…WIGC), and 354-373 (FVTI…AITP).

This sequence belongs to the cytochrome b family. As to quaternary structure, the main subunits of complex b-c1 are: cytochrome b, cytochrome c1 and the Rieske protein. Heme b serves as cofactor.

The protein localises to the mitochondrion inner membrane. Its function is as follows. Component of the ubiquinol-cytochrome c reductase complex (complex III or cytochrome b-c1 complex) that is part of the mitochondrial respiratory chain. The b-c1 complex mediates electron transfer from ubiquinol to cytochrome c. Contributes to the generation of a proton gradient across the mitochondrial membrane that is then used for ATP synthesis. This is Cytochrome b (MT-CYB) from Oryza sativa subsp. japonica (Rice).